The primary structure comprises 136 residues: Small ribosomal subunit protein uS11 (136 aa).

Disordered regions lie at residues 1-20 (MAQRRSSQTTKKVKRKNVTN) and 115-136 (VTPQAHNGTRPPKRVLKREKAR). The span at 125-136 (PPKRVLKREKAR) shows a compositional bias: basic residues.

The protein belongs to the universal ribosomal protein uS11 family. Part of the 30S ribosomal subunit. Interacts with proteins S7 and S18. Binds to IF-3.

Located on the platform of the 30S subunit, it bridges several disparate RNA helices of the 16S rRNA. Forms part of the Shine-Dalgarno cleft in the 70S ribosome. This is Small ribosomal subunit protein uS11 from Mycoplasmopsis pulmonis (strain UAB CTIP) (Mycoplasma pulmonis).